Reading from the N-terminus, the 2201-residue chain is Tenascin (2201 aa).

Positions 1-22 are cleaved as a signal peptide; that stretch reads MGAMTQLLAGVFLAFLALATEG. Asn38 is a glycosylation site (N-linked (GlcNAc...) asparagine). Ser65 and Ser70 each carry phosphoserine. Ser72 carries the phosphoserine; by FAM20C modification. Ser72 carries O-linked (Xyl...) (chondroitin sulfate) serine glycosylation. The stretch at 118 to 145 forms a coiled coil; it reads DVKELLSRLEELENLVSSLREQCTAGAG. Residues Asn166 and Asn184 are each glycosylated (N-linked (GlcNAc...) asparagine). In terms of domain architecture, EGF-like 1; incomplete spans 174 to 186; that stretch reads CVCEPGWKGPNCS. 14 EGF-like domains span residues 186 to 217, 217 to 248, 248 to 280, 280 to 311, 311 to 342, 342 to 373, 373 to 404, 404 to 435, 435 to 466, 466 to 497, 497 to 528, 528 to 559, 559 to 590, and 590 to 621; these read SEPE…EDCS, SQLA…ADCS, SREI…DDCN, NKPL…EDCS, SELI…EDCG, GKPT…VDCS, SEKR…ADCG, GELK…EDCS, SQLR…YDCS, SDMS…EDCR, RDRQ…PDCA, AELS…KDCK, KEQR…LDCG, and GQHS…EDCS. Cystine bridges form between Cys190–Cys200, Cys194–Cys205, Cys207–Cys216, Cys221–Cys231, Cys225–Cys236, Cys238–Cys247, Cys252–Cys263, Cys256–Cys268, Cys270–Cys279, Cys284–Cys294, Cys288–Cys299, Cys301–Cys310, Cys315–Cys325, Cys319–Cys330, Cys332–Cys341, Cys346–Cys356, Cys350–Cys361, Cys363–Cys372, Cys377–Cys387, Cys381–Cys392, Cys394–Cys403, Cys408–Cys418, Cys412–Cys423, Cys425–Cys434, Cys439–Cys449, Cys443–Cys454, Cys456–Cys465, Cys470–Cys480, Cys474–Cys485, Cys487–Cys496, Cys501–Cys511, Cys505–Cys516, Cys518–Cys527, Cys532–Cys542, Cys536–Cys547, Cys549–Cys558, Cys563–Cys573, Cys567–Cys578, Cys580–Cys589, Cys594–Cys604, Cys598–Cys609, and Cys611–Cys620. A glycan (N-linked (GlcNAc...) asparagine) is linked at Asn327. Fibronectin type-III domains lie at 625–715, 716–804, 805–894, 895–990, 991–1075, 1076–1165, 1167–1256, 1258–1350, 1351–1439, 1440–1531, 1533–1621, 1622–1711, 1712–1801, 1802–1888, and 1889–1977; these read PPKD…LPAP, EGLK…TRLD, APSQ…TGLD, APRN…TPKD, LQVS…EQAP, ELEN…TGET, NLGE…TEEV, DMGN…LPQL, GDLA…AKEP, EIGN…ALPL, ENLT…EAEP, EVDN…TAMG, SPKE…ALDG, PSGL…TDLD, and SPRD…IGLL. A glycan (N-linked (GlcNAc...) asparagine) is linked at Asn788. Thr905 carries the phosphothreonine modification. 16 N-linked (GlcNAc...) asparagine glycosylation sites follow: Asn1018, Asn1034, Asn1079, Asn1093, Asn1119, Asn1184, Asn1210, Asn1261, Asn1275, Asn1301, Asn1366, Asn1392, Asn1445, Asn1455, Asn1485, and Asn1534. Asn1809 carries an N-linked (GlcNAc...) asparagine glycan. Residues 1975-2190 form the Fibrinogen C-terminal domain; sequence GLLYPFPKDC…FAEMKLRPSN (216 aa). N-linked (GlcNAc...) asparagine glycosylation is present at Asn2162.

The protein belongs to the tenascin family. In terms of assembly, homohexamer; disulfide-linked. A homotrimer may be formed in the triple coiled-coil region and may be stabilized by disulfide rings at both ends. Two of such half-hexabrachions may be disulfide linked within the central globule. Interacts with CSPG4. Interacts (via the 3rd fibronectin type-III domain) with integrin ITGA9:ITGB1. As to expression, detected in fibroblasts (at protein level).

Its subcellular location is the secreted. It localises to the extracellular space. The protein resides in the extracellular matrix. In terms of biological role, extracellular matrix protein implicated in guidance of migrating neurons as well as axons during development, synaptic plasticity as well as neuronal regeneration. Promotes neurite outgrowth from cortical neurons grown on a monolayer of astrocytes. Ligand for integrins alpha-8/beta-1, alpha-9/beta-1, alpha-V/beta-3 and alpha-V/beta-6. In tumors, stimulates angiogenesis by elongation, migration and sprouting of endothelial cells. The sequence is that of Tenascin (TNC) from Homo sapiens (Human).